A 431-amino-acid chain; its full sequence is Adenylosuccinate synthetase 2 (431 aa).

Residues 13 to 19 (GDEGKGK) and 41 to 43 (GHT) contribute to the GTP site. Aspartate 14 (proton acceptor) is an active-site residue. The Mg(2+) site is built by aspartate 14 and glycine 41. Residues 14–17 (DEGK), 39–42 (NAGH), threonine 130, arginine 144, glutamine 225, threonine 240, and arginine 304 each bind IMP. The active-site Proton donor is the histidine 42. 300–306 (SVTGRPR) is a binding site for substrate. GTP is bound by residues arginine 306, 332-334 (KLD), and 414-416 (STG).

Belongs to the adenylosuccinate synthetase family. In terms of assembly, homodimer. Mg(2+) serves as cofactor.

The protein localises to the cytoplasm. The catalysed reaction is IMP + L-aspartate + GTP = N(6)-(1,2-dicarboxyethyl)-AMP + GDP + phosphate + 2 H(+). Its pathway is purine metabolism; AMP biosynthesis via de novo pathway; AMP from IMP: step 1/2. In terms of biological role, plays an important role in the de novo pathway of purine nucleotide biosynthesis. Catalyzes the first committed step in the biosynthesis of AMP from IMP. The sequence is that of Adenylosuccinate synthetase 2 from Chromobacterium violaceum (strain ATCC 12472 / DSM 30191 / JCM 1249 / CCUG 213 / NBRC 12614 / NCIMB 9131 / NCTC 9757 / MK).